The sequence spans 55 residues: Riparin-1.4 (55 aa).

Positions 1–15 (MKIIVVLAVLMLVSA) are cleaved as a signal peptide. Positions 16–41 (QVCLVSAAEMGHSSDNELSSRDLVKR) are excised as a propeptide. A disulfide bond links Cys-47 and Cys-53. A propeptide spanning residues 54-55 (NH) is cleaved from the precursor.

In terms of tissue distribution, expressed by the skin glands.

It localises to the secreted. The chain is Riparin-1.4 from Crinia riparia (Streambank froglet).